A 614-amino-acid chain; its full sequence is Vitamin B12 transporter BtuB (614 aa).

The first 20 residues, 1–20 (MIKKASLLTACSVTAFSAWA), serve as a signal peptide directing secretion. A TonB box motif is present at residues 26-33 (DTLVVTAI). One can recognise a TBDR plug domain in the interval 38 to 152 (PRSTVLAPTT…IGGVVNIITT (115 aa)). Cyanocob(III)alamin-binding positions include L83, S85, N92, and 110–111 (VS). The TBDR beta-barrel domain maps to 155 to 614 (EPGTEISAGW…EYTLSGSYTF (460 aa)). 3 consecutive transmembrane segments (beta stranded) span residues 158-165 (TEISAGWG), 169-178 (YQNYDVSTQQ), and 184-195 (TRVTLLGDYAHT). Ca(2+)-binding residues include D199, Q211, D213, and D215. The next 2 membrane-spanning stretches (beta stranded) occupy residues 217-227 (FLSKTLYGALE) and 232-248 (DAWS…NRTN). Ca(2+) is bound by residues Y249 and D250. A cyanocob(III)alamin-binding site is contributed by A251. D261 is a Ca(2+) binding site. 14 beta stranded membrane passes run 263 to 277 (RKLY…LRYN), 279 to 296 (ELIK…KDYN), 309 to 325 (TLDE…NNVI), 328 to 337 (HGSIGAGVDW), 353 to 369 (YDQR…QQVG), 371 to 381 (FTFEGAARSDD), 385 to 400 (FGRH…WEFI), 403 to 417 (YRFI…KAPN), 434 to 443 (KSKQWEGAFE), 449 to 458 (VNWRISGYRN), 473 to 490 (YYNE…TANF), 494 to 509 (PLTH…ARNA), 517 to 529 (RRAK…QLDW), and 535 to 550 (DWGI…YDKD). T309 is a binding site for cyanocob(III)alamin. R517 contacts cyanocob(III)alamin. Y551 is a cyanocob(III)alamin binding site. Transmembrane regions (beta stranded) follow at residues 558 to 572 (TVKM…LAVA), 585 to 596 (IANLFDKDYETV), and 602 to 614 (AGRE…SYTF). The TonB C-terminal box signature appears at 597 to 614 (YGYQTAGREYTLSGSYTF).

This sequence belongs to the TonB-dependent receptor family. BtuB (TC 1.B.14.3.1) subfamily.

It is found in the cell outer membrane. Involved in the active translocation of vitamin B12 (cyanocobalamin) across the outer membrane to the periplasmic space. It derives its energy for transport by interacting with the trans-periplasmic membrane protein TonB. This chain is Vitamin B12 transporter BtuB, found in Shigella flexneri serotype 5b (strain 8401).